A 229-amino-acid chain; its full sequence is Transmembrane protein 182 (229 aa).

An N-terminal signal peptide occupies residues 1–26 (MRLNVAVFFGALFGALGVLLFLVAFG). The Extracellular portion of the chain corresponds to 27-114 (SDYWLLATEV…SYDSAIIYRG (88 aa)). An N-linked (GlcNAc...) asparagine glycan is attached at Asn-47. The interval 49–59 (TFHHEGFFWRC) is interaction with ITGB1. N-linked (GlcNAc...) asparagine glycans are attached at residues Asn-68, Asn-85, and Asn-102. The helical transmembrane segment at 115–135 (FWAVLLLLGVVAALTASFLII) threads the bilayer. Over 136–153 (CAAPFSSHFLYKAGGGSY) the chain is Cytoplasmic. The helical transmembrane segment at 154–174 (IASGVLFSLVVILYVIWVQAV) threads the bilayer. Residues 175–200 (ADMESYRALRMRDCWEFTPSILYGWS) lie on the Extracellular side of the membrane. Residues 201–221 (FFLAPAGVFFSLLAGLLFLVV) form a helical membrane-spanning segment. The Cytoplasmic segment spans residues 222–229 (GRHIQIHH).

It belongs to the TMEM182 family. As to quaternary structure, interacts with ITGB1. Highly expressed in white adipose tissues (WAT), with 10-fold to 20-fold higher levels than in brown adipose tissue (BAT). Also expressed in skeletal muscle, heart and lung. Lower relative levels of expression in kidney, spleen, testis, brain and liver.

The protein localises to the cell membrane. Negatively regulates myogenesis and skeletal muscle regeneration via its association with ITGB1. Modulates ITGB1 activation by decreasing ITGB1-LAMB1 interaction and inhibiting ITGB1-mediated intracellular signaling during myogenesis. The protein is Transmembrane protein 182 (Tmem182) of Mus musculus (Mouse).